The chain runs to 174 residues: Late lactation protein B (174 aa).

Positions 1–18 (MKVLFLTIALSLFSILQA) are cleaved as a signal peptide. Residues cysteine 77 and cysteine 169 are joined by a disulfide bond.

It belongs to the calycin superfamily. Lipocalin family. In terms of tissue distribution, mammary gland specific. Secreted in milk.

It localises to the secreted. Its function is as follows. Probably serves a role in the transport of a small ligand released during the hydrolysis of milk fat. The sequence is that of Late lactation protein B (LLPB) from Notamacropus eugenii (Tammar wallaby).